The sequence spans 197 residues: Large ribosomal subunit protein uL13C (197 aa).

This sequence belongs to the universal ribosomal protein uL13 family. In terms of assembly, component of the large ribosomal subunit (LSU). Mature yeast ribosomes consist of a small (40S) and a large (60S) subunit. The 40S small subunit contains 1 molecule of ribosomal RNA (18S rRNA) and at least 33 different proteins. The large 60S subunit contains 3 rRNA molecules (25S, 5.8S and 5S rRNA) and at least 46 different proteins.

Its subcellular location is the cytoplasm. The protein localises to the nucleus. It is found in the nucleolus. Functionally, component of the ribosome, a large ribonucleoprotein complex responsible for the synthesis of proteins in the cell. The small ribosomal subunit (SSU) binds messenger RNAs (mRNAs) and translates the encoded message by selecting cognate aminoacyl-transfer RNA (tRNA) molecules. The large subunit (LSU) contains the ribosomal catalytic site termed the peptidyl transferase center (PTC), which catalyzes the formation of peptide bonds, thereby polymerizing the amino acids delivered by tRNAs into a polypeptide chain. The nascent polypeptides leave the ribosome through a tunnel in the LSU and interact with protein factors that function in enzymatic processing, targeting, and the membrane insertion of nascent chains at the exit of the ribosomal tunnel. The polypeptide is Large ribosomal subunit protein uL13C (rpl1603) (Schizosaccharomyces pombe (strain 972 / ATCC 24843) (Fission yeast)).